Reading from the N-terminus, the 37-residue chain is Large ribosomal subunit protein bL36 (37 aa).

It belongs to the bacterial ribosomal protein bL36 family.

The sequence is that of Large ribosomal subunit protein bL36 from Variovorax paradoxus (strain S110).